The sequence spans 101 residues: MIPGEIIAAAGEIELNAGLETVSIEVANSGDRPVQVGSHYHFAETNPGLIFDRDAARGKRLDIPAGTAVRFEPGQTRQVTLIPLSGKREVFGFRQQVMGKL.

The protein belongs to the urease beta subunit family. As to quaternary structure, heterotrimer of UreA (gamma), UreB (beta) and UreC (alpha) subunits. Three heterotrimers associate to form the active enzyme.

It localises to the cytoplasm. The catalysed reaction is urea + 2 H2O + H(+) = hydrogencarbonate + 2 NH4(+). Its pathway is nitrogen metabolism; urea degradation; CO(2) and NH(3) from urea (urease route): step 1/1. This chain is Urease subunit beta, found in Rhizobium meliloti (strain 1021) (Ensifer meliloti).